Here is a 341-residue protein sequence, read N- to C-terminus: S-adenosylmethionine:tRNA ribosyltransferase-isomerase (341 aa).

This sequence belongs to the QueA family. In terms of assembly, monomer.

It localises to the cytoplasm. The catalysed reaction is 7-aminomethyl-7-carbaguanosine(34) in tRNA + S-adenosyl-L-methionine = epoxyqueuosine(34) in tRNA + adenine + L-methionine + 2 H(+). The protein operates within tRNA modification; tRNA-queuosine biosynthesis. Functionally, transfers and isomerizes the ribose moiety from AdoMet to the 7-aminomethyl group of 7-deazaguanine (preQ1-tRNA) to give epoxyqueuosine (oQ-tRNA). The polypeptide is S-adenosylmethionine:tRNA ribosyltransferase-isomerase (Pelodictyon phaeoclathratiforme (strain DSM 5477 / BU-1)).